The primary structure comprises 489 residues: Lysine--tRNA ligase (489 aa).

Glu399 and Glu406 together coordinate Mg(2+).

This sequence belongs to the class-II aminoacyl-tRNA synthetase family. Homodimer. Mg(2+) serves as cofactor.

Its subcellular location is the cytoplasm. The catalysed reaction is tRNA(Lys) + L-lysine + ATP = L-lysyl-tRNA(Lys) + AMP + diphosphate. The protein is Lysine--tRNA ligase of Synechococcus sp. (strain CC9311).